Reading from the N-terminus, the 326-residue chain is tRNA(Ile)-lysidine synthase (326 aa).

23–28 is an ATP binding site; it reads SGGVDS.

Belongs to the tRNA(Ile)-lysidine synthase family.

The protein resides in the cytoplasm. The enzyme catalyses cytidine(34) in tRNA(Ile2) + L-lysine + ATP = lysidine(34) in tRNA(Ile2) + AMP + diphosphate + H(+). In terms of biological role, ligates lysine onto the cytidine present at position 34 of the AUA codon-specific tRNA(Ile) that contains the anticodon CAU, in an ATP-dependent manner. Cytidine is converted to lysidine, thus changing the amino acid specificity of the tRNA from methionine to isoleucine. The sequence is that of tRNA(Ile)-lysidine synthase from Wolinella succinogenes (strain ATCC 29543 / DSM 1740 / CCUG 13145 / JCM 31913 / LMG 7466 / NCTC 11488 / FDC 602W) (Vibrio succinogenes).